The primary structure comprises 137 residues: Methylglyoxal synthase (137 aa).

Residues 1–137 form the MGS-like domain; that stretch reads MNIALVAHDK…KLSHNDEPPA (137 aa). Residues His-8, Lys-12, 34-37, and 54-55 each bind substrate; these read TGTT and SG. The Proton donor/acceptor role is filled by Asp-60. His-87 serves as a coordination point for substrate.

The protein belongs to the methylglyoxal synthase family.

The catalysed reaction is dihydroxyacetone phosphate = methylglyoxal + phosphate. Functionally, catalyzes the formation of methylglyoxal from dihydroxyacetone phosphate. This Exiguobacterium sp. (strain ATCC BAA-1283 / AT1b) protein is Methylglyoxal synthase.